We begin with the raw amino-acid sequence, 437 residues long: GTPase Der (437 aa).

2 consecutive EngA-type G domains span residues N3–V167 and P176–Q352. GTP-binding positions include G9–S16, D56–W60, N119–D122, G182–S189, D229–I233, and N294–D297. The KH-like domain maps to I353–K437.

It belongs to the TRAFAC class TrmE-Era-EngA-EngB-Septin-like GTPase superfamily. EngA (Der) GTPase family. In terms of assembly, associates with the 50S ribosomal subunit.

In terms of biological role, GTPase that plays an essential role in the late steps of ribosome biogenesis. This chain is GTPase Der, found in Azobacteroides pseudotrichonymphae genomovar. CFP2.